The sequence spans 341 residues: Ribosomal RNA small subunit methyltransferase H (341 aa).

S-adenosyl-L-methionine-binding positions include 47–49 (GGY), aspartate 64, phenylalanine 91, aspartate 109, and glutamine 116.

It belongs to the methyltransferase superfamily. RsmH family.

The protein localises to the cytoplasm. The catalysed reaction is cytidine(1402) in 16S rRNA + S-adenosyl-L-methionine = N(4)-methylcytidine(1402) in 16S rRNA + S-adenosyl-L-homocysteine + H(+). Specifically methylates the N4 position of cytidine in position 1402 (C1402) of 16S rRNA. In Rhizobium rhizogenes (strain K84 / ATCC BAA-868) (Agrobacterium radiobacter), this protein is Ribosomal RNA small subunit methyltransferase H.